Reading from the N-terminus, the 420-residue chain is Ribulose bisphosphate carboxylase (420 aa).

K155 acts as the Proton acceptor in catalysis. K157 is a binding site for substrate. The Mg(2+) site is built by K181, D183, and E184. Residue K181 is modified to N6-carboxylysine. Residue H273 is the Proton acceptor of the active site. Substrate-binding positions include R274, H306, 343–345, and 365–368; these read SGG and QAGG.

Belongs to the RuBisCO large chain family. Type III subfamily. As to quaternary structure, homodimer or homodecamer. In contrast to form I RuBisCO, the form III RuBisCO is composed solely of large subunits. The cofactor is Mg(2+).

It carries out the reaction 2 (2R)-3-phosphoglycerate + 2 H(+) = D-ribulose 1,5-bisphosphate + CO2 + H2O. The enzyme catalyses D-ribulose 1,5-bisphosphate + O2 = 2-phosphoglycolate + (2R)-3-phosphoglycerate + 2 H(+). Its function is as follows. Catalyzes the addition of molecular CO(2) and H(2)O to ribulose 1,5-bisphosphate (RuBP), generating two molecules of 3-phosphoglycerate (3-PGA). Functions in an archaeal AMP degradation pathway, together with AMP phosphorylase and R15P isomerase. This Pyrococcus furiosus (strain ATCC 43587 / DSM 3638 / JCM 8422 / Vc1) protein is Ribulose bisphosphate carboxylase.